We begin with the raw amino-acid sequence, 584 residues long: Protein BONZAI 3 (584 aa).

Residues 1–23 (MGGCLSGDVKGGKQAIGGVQQRP) form a disordered region. Glycine 2 carries the N-myristoyl glycine lipid modification. C2 domains are found at residues 34-167 (HNDA…TLTL) and 178-305 (NRNL…NFVY). Aspartate 67, aspartate 73, aspartate 126, aspartate 128, and aspartate 145 together coordinate Ca(2+). Residues 344–563 (NFMVAVDFTA…SVVQALLEEL (220 aa)) form the VWFA domain.

This sequence belongs to the copine family. Interacts with BAP1 and BAP2. It depends on Ca(2+) as a cofactor. As to expression, expressed at an extremely low level.

It is found in the cell membrane. In terms of biological role, negative regulator of cell death and defense responses. Repress a number of R genes and may have effects in promoting growth and development. May function in membrane trafficking and in fusion of vesicles with plasma membrane. The sequence is that of Protein BONZAI 3 (BON3) from Arabidopsis thaliana (Mouse-ear cress).